Reading from the N-terminus, the 109-residue chain is uncharacterized protein (109 aa).

A helical membrane pass occupies residues 29–49 (ITIIITLVIIFIIFTLIILYF).

Its subcellular location is the membrane. This is an uncharacterized protein from Sputnik virophage.